The primary structure comprises 1399 residues: Meiosis-specific protein ASY2 (1399 aa).

The 239-residue stretch at Gln10 to Val248 folds into the HORMA domain. The span at Pro257–Gln266 shows a compositional bias: acidic residues. 5 disordered regions span residues Pro257–Gln281, Ser487–Pro525, Arg617–Glu656, Pro940–Val974, and Asp1045–Lys1090. Residues Asp267–Gln281 are compositionally biased toward basic and acidic residues. Residues Ser509 to Ser523 are compositionally biased toward pro residues. A compositionally biased stretch (polar residues) spans Arg617 to Ser631. Residues Met1205–Ala1246 are a coiled coil.

It is found in the chromosome. The protein resides in the nucleus. In terms of biological role, required for normal meiosis. The polypeptide is Meiosis-specific protein ASY2 (Arabidopsis thaliana (Mouse-ear cress)).